The chain runs to 358 residues: MKIAILGAGCYRTHAAAGITNFMRACEVAKEVGKPEIALTHSSITYGAELLHLVPDVKEVIVSDPCFAEEPGLVVIDEFDPKEVMEAHLSGNPESIMPKIREVVKAKAKELPKPPKACIHLVHPEDVGLKVTSDDREAVEGADIVITWLPKGNKQPDIIKKFADAIPEGAIVTHACTIPTTKFAKIFKDLGREDLNITSYHPGCVPEMKGQVYIAEGYASEEAVNKLYEIGKIARGKAFKMPANLIGPVCDMCSAVTATVYAGLLAYRDAVTKILGAPADFAQMMADEALTQIHNLMKEKGIANMEEALDPAALLGTADSMCFGPLAEILPTALKVLEKHKVVEEEGKTKCEIMSQKE.

The protein belongs to the HMD family.

The enzyme catalyses 5,10-methenyl-5,6,7,8-tetrahydromethanopterin + H2 = 5,10-methylenetetrahydromethanopterin + H(+). The protein operates within one-carbon metabolism; methanogenesis from CO(2); 5,10-methylene-5,6,7,8-tetrahydromethanopterin from 5,10-methenyl-5,6,7,8-tetrahydromethanopterin (hydrogen route): step 1/1. Functionally, catalyzes the reversible reduction of methenyl-H(4)MPT(+) to methylene-H(4)MPT. This Methanocaldococcus jannaschii (strain ATCC 43067 / DSM 2661 / JAL-1 / JCM 10045 / NBRC 100440) (Methanococcus jannaschii) protein is 5,10-methenyltetrahydromethanopterin hydrogenase (hmd).